We begin with the raw amino-acid sequence, 144 residues long: Protein CT_635 (144 aa).

Residues 110 to 144 form a disordered region; sequence EVTNDIGHSSHKSPTPKKTKSSSQKKSKKKNWIPL. Residues 118 to 144 show a composition bias toward basic residues; sequence SSHKSPTPKKTKSSSQKKSKKKNWIPL.

It belongs to the chlamydial CPn_0742/CT_635/TC_0003 family.

The protein is Protein CT_635 of Chlamydia trachomatis serovar D (strain ATCC VR-885 / DSM 19411 / UW-3/Cx).